We begin with the raw amino-acid sequence, 556 residues long: Adenine deaminase (556 aa).

Belongs to the metallo-dependent hydrolases superfamily. Adenine deaminase family. Mn(2+) is required as a cofactor.

The catalysed reaction is adenine + H2O + H(+) = hypoxanthine + NH4(+). The chain is Adenine deaminase from Archaeoglobus fulgidus (strain ATCC 49558 / DSM 4304 / JCM 9628 / NBRC 100126 / VC-16).